Here is a 291-residue protein sequence, read N- to C-terminus: Porphobilinogen deaminase (291 aa).

At Cys237 the chain carries S-(dipyrrolylmethanemethyl)cysteine.

It belongs to the HMBS family. Monomer. It depends on dipyrromethane as a cofactor.

It carries out the reaction 4 porphobilinogen + H2O = hydroxymethylbilane + 4 NH4(+). The protein operates within porphyrin-containing compound metabolism; protoporphyrin-IX biosynthesis; coproporphyrinogen-III from 5-aminolevulinate: step 2/4. Tetrapolymerization of the monopyrrole PBG into the hydroxymethylbilane pre-uroporphyrinogen in several discrete steps. This Clostridium perfringens (strain 13 / Type A) protein is Porphobilinogen deaminase.